The following is a 434-amino-acid chain: Na(+)/H(+) antiporter NhaA 1 (434 aa).

The segment covering 1 to 15 has biased composition (pro residues); sequence MISPNPALPTPPHAP. Positions 1 to 21 are disordered; sequence MISPNPALPTPPHAPTAPGRG. Transmembrane regions (helical) follow at residues 34–54, 74–94, 112–132, 143–163, 173–193, 196–216, 222–242, 245–265, 294–314, 326–346, 362–382, and 393–413; these read GGIL…SPAA, LSVS…VVGL, ALPI…FTLI, GWAI…AVVG, FLLT…AVFY, GIAF…GILV, AWYV…ASGI, TIAG…RAGV, IAVP…LEGL, IIVA…LLVA, VLGL…VGEL, and AVKV…GTLL.

The protein belongs to the NhaA Na(+)/H(+) (TC 2.A.33) antiporter family.

The protein resides in the cell membrane. The enzyme catalyses Na(+)(in) + 2 H(+)(out) = Na(+)(out) + 2 H(+)(in). Its function is as follows. Na(+)/H(+) antiporter that extrudes sodium in exchange for external protons. The protein is Na(+)/H(+) antiporter NhaA 1 of Clavibacter michiganensis subsp. michiganensis (strain NCPPB 382).